The sequence spans 451 residues: Ammonium transporter Rh type B (451 aa).

Residues 1–11 (MADVSTSMRLK) are Cytoplasmic-facing. Residues 12-32 (LPVVCFILEIILIILFGALVQ) form a helical membrane-spanning segment. Over 33 to 63 (YDYETDAKEWHNQSHNDYENDFYFRYPSFQD) the chain is Extracellular. The N-linked (GlcNAc...) asparagine glycan is linked to Asn44. Residues 64-84 (VHVMIFIGFGFLMTFLQKYGF) traverse the membrane as a helical segment. The Cytoplasmic segment spans residues 85–87 (GSV). A helical transmembrane segment spans residues 88 to 108 (GFNFLIAAFSLQWATLMQGFF). Over 109–121 (HGMHGGKIHVGVE) the chain is Extracellular. The chain crosses the membrane as a helical span at residues 122–142 (SMINADFCTGSVLISFGAVLG). Over 143–151 (KTSPIQLLT) the chain is Cytoplasmic. Residues 152-172 (MAMFEVTLFAVNEFILLSLLG) form a helical membrane-spanning segment. Residues 173-176 (TRDA) are Extracellular-facing. Residues 177-197 (GGSMTIHTFGAYFGLMVTRIL) form a helical membrane-spanning segment. The Cytoplasmic segment spans residues 198-216 (YRPHLDKSKHRNSSVYHSD). The helical transmembrane segment at 217 to 237 (LFAMIGTIYLWMFWPSFNSAI) threads the bilayer. Residues 238 to 247 (TAHGDDQHRT) lie on the Extracellular side of the membrane. The chain crosses the membrane as a helical span at residues 248–270 (ALNTYYSLAACTLATYGMSAVTS). The Cytoplasmic segment spans residues 271–274 (HDGK). The helical transmembrane segment at 275 to 295 (LDMVHIQNAALAGGVAVGTAG) threads the bilayer. Residues 296–298 (EMM) are Extracellular-facing. A helical membrane pass occupies residues 299 to 319 (LTPFGSMIVGFLAGIISVLGF). Over 320-340 (KFLSPILESKLKIQDTCGVHN) the chain is Cytoplasmic. Residues 341–361 (LHGMPGVLGAIVGAVTAALAT) traverse the membrane as a helical segment. Residues 362–390 (MDVYGKGMEDVFPAVADGSIDASKQGGVQ) lie on the Extracellular side of the membrane. A helical membrane pass occupies residues 391–411 (ALSLAITLGIALLGGLIVVFG). The Cytoplasmic segment spans residues 412–451 (TPPDTLCFEDGVYWEVPESEAPHEAQLTTVRTEETEKLSS).

It belongs to the ammonium transporter (TC 2.A.49) family. Rh subfamily.

Its subcellular location is the basolateral cell membrane. It is found in the cytoplasmic vesicle membrane. In terms of biological role, functions as an ammonia transporter. May play a role in the elimination of ammonia in the gill. The chain is Ammonium transporter Rh type B (rhbg) from Tetraodon nigroviridis (Spotted green pufferfish).